Consider the following 127-residue polypeptide: Large ribosomal subunit protein bL20 (127 aa).

Belongs to the bacterial ribosomal protein bL20 family.

Its function is as follows. Binds directly to 23S ribosomal RNA and is necessary for the in vitro assembly process of the 50S ribosomal subunit. It is not involved in the protein synthesizing functions of that subunit. In Renibacterium salmoninarum (strain ATCC 33209 / DSM 20767 / JCM 11484 / NBRC 15589 / NCIMB 2235), this protein is Large ribosomal subunit protein bL20.